A 316-amino-acid chain; its full sequence is Beta-ketoacyl-[acyl-carrier-protein] synthase III 1 (316 aa).

Catalysis depends on residues Cys112 and His243. The ACP-binding stretch occupies residues 244–248 (QANYR). Residue Asn273 is part of the active site.

It belongs to the thiolase-like superfamily. FabH family. As to quaternary structure, homodimer.

It localises to the cytoplasm. It catalyses the reaction malonyl-[ACP] + acetyl-CoA + H(+) = 3-oxobutanoyl-[ACP] + CO2 + CoA. It functions in the pathway lipid metabolism; fatty acid biosynthesis. Functionally, catalyzes the condensation reaction of fatty acid synthesis by the addition to an acyl acceptor of two carbons from malonyl-ACP. Catalyzes the first condensation reaction which initiates fatty acid synthesis and may therefore play a role in governing the total rate of fatty acid production. Possesses both acetoacetyl-ACP synthase and acetyl transacylase activities. Its substrate specificity determines the biosynthesis of branched-chain and/or straight-chain of fatty acids. The protein is Beta-ketoacyl-[acyl-carrier-protein] synthase III 1 of Vibrio parahaemolyticus serotype O3:K6 (strain RIMD 2210633).